The sequence spans 570 residues: Spastin (570 aa).

The Cytoplasmic portion of the chain corresponds to 1 to 35 (MNSGHKARLRGGRACGPVSDGSARGNRLLFYTRSL). The helical intramembrane region spans 36–52 (SRVPEWLLRVLLLLLRW). Topologically, residues 53-570 (LFQPIRRAMA…NREYGDTTGV (518 aa)) are cytoplasmic. The 76-residue stretch at 83 to 158 (YHKQAFEFIS…SMAEDRLKLL (76 aa)) folds into the MIT domain. The segment at 186–269 (APASGAVSKK…SPQRKRDMKN (84 aa)) is disordered. Polar residues-rich tracts occupy residues 199–208 (LTITNQTSLR), 216–242 (TPNASGLNCTPSAAQSSRTGPQNNQKG), and 251–261 (VKASTTATASP). 335–342 (GPPGNGKT) serves as a coordination point for ATP.

Belongs to the AAA ATPase family. Spastin subfamily. Homohexamer. The homohexamer is stabilized by ATP-binding. The homohexamer may adopt a ring conformation through which microtubules pass prior to being severed. Interacts with microtubules.

It localises to the membrane. The protein resides in the cytoplasm. The protein localises to the cytoskeleton. It is found in the microtubule organizing center. Its subcellular location is the centrosome. It localises to the perinuclear region. The protein resides in the nucleus. It carries out the reaction n ATP + n H2O + a microtubule = n ADP + n phosphate + (n+1) alpha/beta tubulin heterodimers.. In terms of biological role, ATP-dependent microtubule severing protein that specifically recognizes and cuts microtubules that are polyglutamylated. Preferentially recognizes and acts on microtubules decorated with short polyglutamate tails: severing activity increases as the number of glutamates per tubulin rises from one to eight, but decreases beyond this glutamylation threshold. Microtubule severing promotes reorganization of cellular microtubule arrays and the release of microtubules from the centrosome following nucleation. Required for membrane traffic from the endoplasmic reticulum (ER) to the Golgi and for completion of the abscission stage of cytokinesis. Also plays a role in axon growth and the formation of axonal branches. This chain is Spastin, found in Danio rerio (Zebrafish).